We begin with the raw amino-acid sequence, 246 residues long: Receptor-transporting protein 4 (246 aa).

Over 1–224 the chain is Cytoplasmic; sequence MVVDFWTWEQ…EKLGPSRDPD (224 aa). Residues 48–159 form a 3CxxC-type zinc finger; it reads RAFGWFRCSS…DTANCEACTL (112 aa). The helical transmembrane segment at 225 to 245 threads the bilayer; it reads PLNICVFILLLVFIVVKCFTS.

This sequence belongs to the TMEM7 family. As to quaternary structure, interacts with TASR16. Interacts with OPRD1 and OPRM1; the interaction promotes cell surface localization of the OPDR1-OPRM1 heterodimer. (Microbial infection) Interacts with influenza A virus protein NS1; this interaction sequesters NS1 from interacting with RIG-I/DDX58 to restore antiviral signaling. As to expression, expressed in circumvallate papillae and testis.

The protein localises to the membrane. The protein resides in the cytoplasm. Its function is as follows. Chaperone protein that facilitates the trafficking and functional cell surface expression of some G-protein coupled receptors (GPCRs). Promotes functional expression of the bitter taste receptor TAS2R16. Also promotes functional expression of the opioid receptor heterodimer OPRD1-OPRM1. In addition, acts as a potent IFN-inducible suppressor of pathogens including lyssavirus rabies, influenza A or yellow fever virus. Mechanistically, associates with the viral replicase, binds viral RNA, and thereby suppresses viral genome amplification that replicates at the endoplasmic reticulum. In addition, restores antiviral signaling by interacting with and sequestering influenza A virus protein NS1. This Homo sapiens (Human) protein is Receptor-transporting protein 4 (RTP4).